A 256-amino-acid polypeptide reads, in one-letter code: Probable hydroxyacylglutathione hydrolase SPCC13B11.03c (256 aa).

The Zn(2+) site is built by H63, H65, D67, H68, H118, and D139. Residues 148–150 (RFF), 178–180 (HEY), and 250–253 (RTLK) each bind substrate. H178 contributes to the Zn(2+) binding site.

This sequence belongs to the metallo-beta-lactamase superfamily. Glyoxalase II family. Zn(2+) is required as a cofactor.

Its subcellular location is the cytoplasm. The protein resides in the nucleus. It catalyses the reaction an S-(2-hydroxyacyl)glutathione + H2O = a 2-hydroxy carboxylate + glutathione + H(+). It carries out the reaction (R)-S-lactoylglutathione + H2O = (R)-lactate + glutathione + H(+). It participates in secondary metabolite metabolism; methylglyoxal degradation; (R)-lactate from methylglyoxal: step 2/2. In terms of biological role, thiolesterase that catalyzes the hydrolysis of S-D-lactoylglutathione to form glutathione and D-lactic acid. Involved in the metabolism of methylglyoxal, a toxic compound for yeast proliferation, by converting methylglyoxal to lactate via S-D-lactoylglutathione by sequential enzyme reactions catalyzed by glyoxalase I and glyoxalase II. This Schizosaccharomyces pombe (strain 972 / ATCC 24843) (Fission yeast) protein is Probable hydroxyacylglutathione hydrolase SPCC13B11.03c.